A 452-amino-acid chain; its full sequence is Putrescine hydroxycinnamoyltransferase (452 aa).

The active-site Proton acceptor is H151. The segment at P213–E234 is disordered. Over residues G222–E234 the composition is skewed to basic and acidic residues. D398 acts as the Proton acceptor in catalysis.

The protein belongs to the plant acyltransferase family. Highly expressed in roots. Expressed at low levels in flowers.

Its function is as follows. Hydroxycinnamoyl transferase that catalyzes the transfer of an acyl from p-coumaryol-CoA to putrescine, to produce coumaroyl putrescine. Can use feruloyl-CoA, caffeoyl-CoA and sinapoyl-CoA as acyl donors. Seems to be able to transfer the acyl group from feruloyl-CoA to the acyl acceptors agmatine and spermidine. The polypeptide is Putrescine hydroxycinnamoyltransferase (Oryza sativa subsp. japonica (Rice)).